Here is a 186-residue protein sequence, read N- to C-terminus: Chromosomal replication initiator protein DnaA (186 aa).

A region of interest (domain I, interacts with DnaA modulators) is located at residue E1. Residue E1 is a region of interest, domain II. The segment at 1 to 99 is domain III, AAA+ region; it reads EFFKTFNALI…GALNKVTHTS (99 aa). The interval 100-186 is domain IV, binds dsDNA; that stretch reads LIGRSMTVES…GRNFGGRDHT (87 aa).

The protein belongs to the DnaA family. As to quaternary structure, oligomerizes as a right-handed, spiral filament on DNA at oriC.

The protein resides in the cytoplasm. Plays an essential role in the initiation and regulation of chromosomal replication. ATP-DnaA binds to the origin of replication (oriC) to initiate formation of the DNA replication initiation complex once per cell cycle. Binds the DnaA box (a 9 base pair repeat at the origin) and separates the double-stranded (ds)DNA. Forms a right-handed helical filament on oriC DNA; dsDNA binds to the exterior of the filament while single-stranded (ss)DNA is stabiized in the filament's interior. The ATP-DnaA-oriC complex binds and stabilizes one strand of the AT-rich DNA unwinding element (DUE), permitting loading of DNA polymerase. After initiation quickly degrades to an ADP-DnaA complex that is not apt for DNA replication. Binds acidic phospholipids. This Wolbachia sp protein is Chromosomal replication initiator protein DnaA.